The following is a 341-amino-acid chain: S-adenosylmethionine:tRNA ribosyltransferase-isomerase (341 aa).

Belongs to the QueA family. In terms of assembly, monomer.

The protein localises to the cytoplasm. The enzyme catalyses 7-aminomethyl-7-carbaguanosine(34) in tRNA + S-adenosyl-L-methionine = epoxyqueuosine(34) in tRNA + adenine + L-methionine + 2 H(+). It participates in tRNA modification; tRNA-queuosine biosynthesis. Transfers and isomerizes the ribose moiety from AdoMet to the 7-aminomethyl group of 7-deazaguanine (preQ1-tRNA) to give epoxyqueuosine (oQ-tRNA). This is S-adenosylmethionine:tRNA ribosyltransferase-isomerase from Clostridium botulinum (strain Loch Maree / Type A3).